The following is a 2167-amino-acid chain: GTPase-activating protein BEM2/IPL2 (2167 aa).

3 disordered regions span residues 1–209, 243–305, and 353–372; these read MKGL…NDNE, TNYN…ASAR, and NSSIANENHQQKKQQTNNQA. Low complexity predominate over residues 12–51; that stretch reads SSTASASSSSTSTSHKTTTASTASSSSPSSSSQTIRNSTS. A Glycyl lysine isopeptide (Lys-Gly) (interchain with G-Cter in ubiquitin) cross-link involves residue Lys27. Positions 58–70 are enriched in basic residues; it reads HSHHHHGQGHSHH. Over residues 89 to 118 the composition is skewed to polar residues; it reads KQYTSTSSSQVNLGMYHSDTNTRSSRSIAS. At Ser129 the chain carries Phosphoserine. Residues 134–145 show a composition bias toward polar residues; the sequence is SNSSSQKSNAQD. Low complexity-rich tracts occupy residues 160 to 177 and 187 to 207; these read SLLPSRSSSLSPPQSRCS and NTSGISNSSGTNNNNSNNNND. A compositionally biased stretch (polar residues) spans 243–252; sequence TNYNSSMTAP. Phosphoserine is present on Ser283. A compositionally biased stretch (low complexity) spans 289–300; sequence SSSTTATNSGND. One can recognise a Ras-GEF domain in the interval 592-859; sequence DITTLADEVH…MKLSVQHEPP (268 aa). A phosphoserine mark is found at Ser1012 and Ser1016. Thr1038 carries the post-translational modification Phosphothreonine. 3 positions are modified to phosphoserine: Ser1046, Ser1054, and Ser1128. Over residues 1771–1794 the composition is skewed to polar residues; sequence ISGTHSDNDHSYNINKNTGQTPSL. Positions 1771 to 1828 are disordered; the sequence is ISGTHSDNDHSYNINKNTGQTPSLGSVMESNNSARNRRDSRASFSTNRSSVVSNSSHN. Residues 1812-1828 show a composition bias toward low complexity; the sequence is ASFSTNRSSVVSNSSHN. Positions 1846–1948 constitute a PH domain; sequence GFNTSSSNYS…WIKMIKASKR (103 aa). The region spanning 1967-2165 is the Rho-GAP domain; the sequence is VPLEDVCERE…DFIKNPNDYF (199 aa).

In terms of biological role, GTPase-activating protein (GAP) for RHO1 and RHO2. Involved in the control of cellular morphogenesis. Required for proper bud site selection and bud emergence. The protein is GTPase-activating protein BEM2/IPL2 (BEM2) of Saccharomyces cerevisiae (strain ATCC 204508 / S288c) (Baker's yeast).